A 459-amino-acid chain; its full sequence is Phosphoglucosamine mutase (459 aa).

Residue Ser-102 is the Phosphoserine intermediate of the active site. Mg(2+)-binding residues include Ser-102, Asp-243, Asp-245, and Asp-247. The residue at position 102 (Ser-102) is a Phosphoserine.

It belongs to the phosphohexose mutase family. Mg(2+) is required as a cofactor. Post-translationally, activated by phosphorylation.

The enzyme catalyses alpha-D-glucosamine 1-phosphate = D-glucosamine 6-phosphate. In terms of biological role, catalyzes the conversion of glucosamine-6-phosphate to glucosamine-1-phosphate. This Bartonella quintana (strain Toulouse) (Rochalimaea quintana) protein is Phosphoglucosamine mutase.